We begin with the raw amino-acid sequence, 199 residues long: Ras-related protein Rab-7b (199 aa).

Residues 15-22 (GAIGVGKT), 34-40 (YEEYQTT), 63-67 (DTGGQ), 124-127 (NKID), and 154-155 (AK) each bind GTP. 2 short sequence motifs (switch) span residues 28–41 (YVHKTFYEEYQTTL) and 67–82 (QERFRSMVSTFYKGSD). Residue S186 is modified to Phosphoserine. 2 S-geranylgeranyl cysteine lipidation sites follow: C198 and C199.

This sequence belongs to the small GTPase superfamily. Rab family. Expressed in heart, placenta, lung, skeletal muscle and peripheral blood leukocyte.

The protein localises to the late endosome. The protein resides in the lysosome. Its subcellular location is the golgi apparatus. It is found in the trans-Golgi network. It localises to the cytoplasmic vesicle. The protein localises to the phagosome. The protein resides in the phagosome membrane. Its function is as follows. Controls vesicular trafficking from endosomes to the trans-Golgi network (TGN). Acts as a negative regulator of TLR9 signaling and can suppress TLR9-triggered TNFA, IL6, and IFNB production in macrophages by promoting TLR9 lysosomal degradation. Also negatively regulates TLR4 signaling in macrophages by promoting lysosomal degradation of TLR4. Promotes megakaryocytic differentiation by increasing NF-kappa-B-dependent IL6 production and subsequently enhancing the association of STAT3 with GATA1. Not involved in the regulation of the EGF- and EGFR degradation pathway. The sequence is that of Ras-related protein Rab-7b (RAB7B) from Homo sapiens (Human).